Reading from the N-terminus, the 400-residue chain is Argininosuccinate synthase (400 aa).

Position 10 to 18 (10 to 18) interacts with ATP; that stretch reads AYSGGVDTS. Tyr-89 lines the L-citrulline pocket. Gly-119 is an ATP binding site. L-aspartate-binding residues include Thr-121, Asn-125, and Asp-126. Asn-125 is an L-citrulline binding site. L-citrulline contacts are provided by Arg-129, Ser-177, Ser-186, Glu-262, and Tyr-274.

Belongs to the argininosuccinate synthase family. Type 1 subfamily. Homotetramer.

The protein resides in the cytoplasm. It catalyses the reaction L-citrulline + L-aspartate + ATP = 2-(N(omega)-L-arginino)succinate + AMP + diphosphate + H(+). It functions in the pathway amino-acid biosynthesis; L-arginine biosynthesis; L-arginine from L-ornithine and carbamoyl phosphate: step 2/3. In Synechococcus sp. (strain JA-2-3B'a(2-13)) (Cyanobacteria bacterium Yellowstone B-Prime), this protein is Argininosuccinate synthase.